The chain runs to 149 residues: Ribosomal RNA large subunit methyltransferase H (149 aa).

Residues L71, G98, and 117 to 122 each bind S-adenosyl-L-methionine; that span reads LSKLTL.

It belongs to the RNA methyltransferase RlmH family. In terms of assembly, homodimer.

It localises to the cytoplasm. It carries out the reaction pseudouridine(1915) in 23S rRNA + S-adenosyl-L-methionine = N(3)-methylpseudouridine(1915) in 23S rRNA + S-adenosyl-L-homocysteine + H(+). Its function is as follows. Specifically methylates the pseudouridine at position 1915 (m3Psi1915) in 23S rRNA. This Campylobacter jejuni subsp. jejuni serotype O:6 (strain 81116 / NCTC 11828) protein is Ribosomal RNA large subunit methyltransferase H.